A 296-amino-acid chain; its full sequence is Putative peptide transport system permease protein BruAb2_1032 (296 aa).

Helical transmembrane passes span 35 to 55, 97 to 117, 131 to 151, 205 to 225, 229 to 249, and 260 to 280; these read IGLVLLLIVVLAAVLAPWITN, LWIGLTVAVLSAILGAIIGIA, VMDALMAFPAILLAIGISAAL, ILPNCLAPLLVTLTFVFAYAI, ATLSFLGIGTPPPHASWGSIV, and WWIMLFPGIAITISALAINLI. Positions 97–281 constitute an ABC transmembrane type-1 domain; the sequence is LWIGLTVAVL…ISALAINLIG (185 aa).

Belongs to the binding-protein-dependent transport system permease family. As to quaternary structure, the complex is composed of two ATP-binding proteins (BruAb2_1033 and BruAb2_1034), two transmembrane proteins (BruAb2_1031 and BruAb2_1032) and a solute-binding protein (BruAb2_1030).

The protein resides in the cell inner membrane. In terms of biological role, probably part of an ABC transporter complex that could be involved in peptide import. Probably responsible for the translocation of the substrate across the membrane. This chain is Putative peptide transport system permease protein BruAb2_1032, found in Brucella abortus biovar 1 (strain 9-941).